Reading from the N-terminus, the 370-residue chain is MAIPSRPIREEIRSIAPYNAGLTLEEVRAKYHVDEVAKLSSNENPLGPSPALRRLFPDIGELARLYPDPQGRALCARLAASFDVENNQVILGNGSEDLIAVICRSVVRAGDTVVTLYPSFPLHEDYTTLMGGKVDRVTVTPDLSVDMDALLAAIARKPRMLMFSNPMNPVGSWLTPLQLAKVVAALDPETLIVVDEAYAEYAAGDDYPSAAEVLKVTGLNWVVLRTFSKAYGLAGLRIGYGIVSDGSLCDFFNRARTPFNTNAIAQVSALAAFDDTYHLNRSVELALVERERMKKELATMGYRIAPSKCNFLFFDARTEATPVAEALLRRGVIVKPWKQPRFETYIRVSIGSPVENDHFIHALKEVEAVG.

Residue Lys-229 is modified to N6-(pyridoxal phosphate)lysine.

Belongs to the class-II pyridoxal-phosphate-dependent aminotransferase family. Histidinol-phosphate aminotransferase subfamily. In terms of assembly, homodimer. Requires pyridoxal 5'-phosphate as cofactor.

It carries out the reaction L-histidinol phosphate + 2-oxoglutarate = 3-(imidazol-4-yl)-2-oxopropyl phosphate + L-glutamate. Its pathway is amino-acid biosynthesis; L-histidine biosynthesis; L-histidine from 5-phospho-alpha-D-ribose 1-diphosphate: step 7/9. The sequence is that of Histidinol-phosphate aminotransferase 3 (hisC3) from Rhizobium meliloti (strain 1021) (Ensifer meliloti).